Consider the following 242-residue polypeptide: UDP-2,3-diacylglucosamine hydrolase (242 aa).

Mn(2+) is bound by residues Asp-7, His-9, Asp-40, Asn-78, and His-113. A substrate-binding site is contributed by 78–79 (NR). Substrate-binding residues include Asp-121, Ser-159, Thr-163, Lys-166, and His-194. 2 residues coordinate Mn(2+): His-194 and His-196.

This sequence belongs to the LpxH family. Requires Mn(2+) as cofactor.

It is found in the cell inner membrane. It carries out the reaction UDP-2-N,3-O-bis[(3R)-3-hydroxytetradecanoyl]-alpha-D-glucosamine + H2O = 2-N,3-O-bis[(3R)-3-hydroxytetradecanoyl]-alpha-D-glucosaminyl 1-phosphate + UMP + 2 H(+). Its pathway is glycolipid biosynthesis; lipid IV(A) biosynthesis; lipid IV(A) from (3R)-3-hydroxytetradecanoyl-[acyl-carrier-protein] and UDP-N-acetyl-alpha-D-glucosamine: step 4/6. Its function is as follows. Hydrolyzes the pyrophosphate bond of UDP-2,3-diacylglucosamine to yield 2,3-diacylglucosamine 1-phosphate (lipid X) and UMP by catalyzing the attack of water at the alpha-P atom. Involved in the biosynthesis of lipid A, a phosphorylated glycolipid that anchors the lipopolysaccharide to the outer membrane of the cell. The protein is UDP-2,3-diacylglucosamine hydrolase of Ectopseudomonas mendocina (strain ymp) (Pseudomonas mendocina).